The following is a 369-amino-acid chain: Chorismate synthase (369 aa).

Positions 48 and 54 each coordinate NADP(+). Residues 125-127 (RSS), 238-239 (NA), glycine 278, 293-297 (KPTSS), and arginine 319 each bind FMN.

It belongs to the chorismate synthase family. In terms of assembly, homotetramer. FMNH2 is required as a cofactor.

The catalysed reaction is 5-O-(1-carboxyvinyl)-3-phosphoshikimate = chorismate + phosphate. It functions in the pathway metabolic intermediate biosynthesis; chorismate biosynthesis; chorismate from D-erythrose 4-phosphate and phosphoenolpyruvate: step 7/7. In terms of biological role, catalyzes the anti-1,4-elimination of the C-3 phosphate and the C-6 proR hydrogen from 5-enolpyruvylshikimate-3-phosphate (EPSP) to yield chorismate, which is the branch point compound that serves as the starting substrate for the three terminal pathways of aromatic amino acid biosynthesis. This reaction introduces a second double bond into the aromatic ring system. In Nitrosococcus oceani (strain ATCC 19707 / BCRC 17464 / JCM 30415 / NCIMB 11848 / C-107), this protein is Chorismate synthase.